We begin with the raw amino-acid sequence, 361 residues long: Glyceraldehyde-3-phosphate dehydrogenase, glycosomal (361 aa).

NAD(+)-binding positions include 13-14, Asp-39, and Arg-93; that span reads RI. Residues 166-168, Thr-198, 227-228, and Arg-250 contribute to the D-glyceraldehyde 3-phosphate site; these read SCT and TG. Cys-167 (nucleophile) is an active-site residue. NAD(+) is bound at residue Asn-336. A Microbody targeting signal motif is present at residues 359-361; the sequence is SKL.

Belongs to the glyceraldehyde-3-phosphate dehydrogenase family. As to quaternary structure, homotetramer.

The protein localises to the glycosome. The catalysed reaction is D-glyceraldehyde 3-phosphate + phosphate + NAD(+) = (2R)-3-phospho-glyceroyl phosphate + NADH + H(+). It functions in the pathway carbohydrate degradation; glycolysis; pyruvate from D-glyceraldehyde 3-phosphate: step 1/5. In Crithidia fasciculata, this protein is Glyceraldehyde-3-phosphate dehydrogenase, glycosomal (GAPDG).